The sequence spans 854 residues: Valine--tRNA ligase (854 aa).

A 'HIGH' region motif is present at residues 46 to 56 (PTVSGDLHIGH). A 'KMSKS' region motif is present at residues 551-555 (KMSKS). Residue K554 participates in ATP binding.

The protein belongs to the class-I aminoacyl-tRNA synthetase family. ValS type 2 subfamily. Monomer.

Its subcellular location is the cytoplasm. The catalysed reaction is tRNA(Val) + L-valine + ATP = L-valyl-tRNA(Val) + AMP + diphosphate. Its function is as follows. Catalyzes the attachment of valine to tRNA(Val). As ValRS can inadvertently accommodate and process structurally similar amino acids such as threonine, to avoid such errors, it has a 'posttransfer' editing activity that hydrolyzes mischarged Thr-tRNA(Val) in a tRNA-dependent manner. The chain is Valine--tRNA ligase from Orientia tsutsugamushi (strain Boryong) (Rickettsia tsutsugamushi).